A 1723-amino-acid polypeptide reads, in one-letter code: Lys-gingipain HG66 (1723 aa).

A signal peptide spans 1–24 (MRKLLLLIAASLLGVGLYAQNAKI). Residues 25-228 (KLDAPTTRTT…ETAYKQLFNR (204 aa)) constitute a propeptide that is removed on maturation. Asp313, Asp337, Asp339, Phe341, and Glu343 together coordinate Ca(2+). His444 functions as the Proton donor in the catalytic mechanism. Cys477 (nucleophile) is an active-site residue. Residues Phe482 and Glu491 each contribute to the Ca(2+) site. The segment at 965–985 (DAPNGTPNPNPNPNPGTTTLS) is disordered. 11 residues coordinate Ca(2+): Ser987, Glu989, Asp1000, Asp1002, Asp1004, His1006, Ser1021, Gly1023, Asn1042, Asp1145, and Glu1146.

It belongs to the peptidase C25 family. Post-translationally, proteolytically cleaved into a catalytic subunit and three adhesins. Arg-gingipain is involved in this post-translational processing.

Its subcellular location is the secreted. The enzyme catalyses Endopeptidase with strict specificity for lysyl bonds.. Its function is as follows. Cysteine proteinase with a strong preference for substrates with Lys in the P1 position. Hydrolyzes bovine hemoglobin, bovine serum albumin, casein, human placental type I collagen and human IgA and IgG. Disrupts the functions of polymorphonuclear leukocytes. May act as a virulence factor in the development of peridontal disease. Involved in the coaggregation of P.gingivalis with other oral bacteria. The polypeptide is Lys-gingipain HG66 (Porphyromonas gingivalis (Bacteroides gingivalis)).